A 162-amino-acid polypeptide reads, in one-letter code: MEIQGTRFGTLEFDEKEIIYLNEGLLGFPLSKQFLMFPYGEDSSFFWLQSVDEPEIAFIVINPFDFFSDLEFAVEDEDASSLVLARSEDVEIFTLVTIPEGRPEEMRTNLAGPVVVNVQNRLGKQILCKDYSPRQPLIPDSMRSQLKEQARSSKGGHVAGGR.

It belongs to the FliW family. Interacts with translational regulator CsrA and flagellin(s).

It is found in the cytoplasm. Its function is as follows. Acts as an anti-CsrA protein, binds CsrA and prevents it from repressing translation of its target genes, one of which is flagellin. Binds to flagellin and participates in the assembly of the flagellum. The protein is Flagellar assembly factor FliW of Magnetococcus marinus (strain ATCC BAA-1437 / JCM 17883 / MC-1).